We begin with the raw amino-acid sequence, 411 residues long: LL-diaminopimelate aminotransferase (411 aa).

The substrate site is built by Tyr-15 and Gly-42. Pyridoxal 5'-phosphate is bound by residues Tyr-72, 108–109 (SK), Tyr-132, Asn-187, Tyr-218, and 246–248 (SFS). Residues Lys-109, Tyr-132, and Asn-187 each contribute to the substrate site. Lys-249 is modified (N6-(pyridoxal phosphate)lysine). 2 residues coordinate pyridoxal 5'-phosphate: Arg-257 and Asn-292. Positions 292 and 388 each coordinate substrate.

Belongs to the class-I pyridoxal-phosphate-dependent aminotransferase family. LL-diaminopimelate aminotransferase subfamily. In terms of assembly, homodimer. The cofactor is pyridoxal 5'-phosphate.

The enzyme catalyses (2S,6S)-2,6-diaminopimelate + 2-oxoglutarate = (S)-2,3,4,5-tetrahydrodipicolinate + L-glutamate + H2O + H(+). The protein operates within amino-acid biosynthesis; L-lysine biosynthesis via DAP pathway; LL-2,6-diaminopimelate from (S)-tetrahydrodipicolinate (aminotransferase route): step 1/1. In terms of biological role, involved in the synthesis of meso-diaminopimelate (m-DAP or DL-DAP), required for both lysine and peptidoglycan biosynthesis. Catalyzes the direct conversion of tetrahydrodipicolinate to LL-diaminopimelate. The polypeptide is LL-diaminopimelate aminotransferase (Trichodesmium erythraeum (strain IMS101)).